Consider the following 194-residue polypeptide: Imidazoleglycerol-phosphate dehydratase (194 aa).

Belongs to the imidazoleglycerol-phosphate dehydratase family.

It is found in the cytoplasm. The catalysed reaction is D-erythro-1-(imidazol-4-yl)glycerol 3-phosphate = 3-(imidazol-4-yl)-2-oxopropyl phosphate + H2O. It functions in the pathway amino-acid biosynthesis; L-histidine biosynthesis; L-histidine from 5-phospho-alpha-D-ribose 1-diphosphate: step 6/9. This Streptococcus sanguinis (strain SK36) protein is Imidazoleglycerol-phosphate dehydratase.